We begin with the raw amino-acid sequence, 330 residues long: D-xylose-binding periplasmic protein (330 aa).

The signal sequence occupies residues 1-23; it reads MKIKNILLTLCTSLLLTNVAAHA.

The protein belongs to the bacterial solute-binding protein 2 family.

The protein resides in the periplasm. Its function is as follows. Involved in the high-affinity D-xylose membrane transport system. Binds with high affinity to xylose. The chain is D-xylose-binding periplasmic protein (xylF) from Escherichia coli (strain K12).